The sequence spans 73 residues: Translational regulator CsrA (73 aa).

It belongs to the CsrA/RsmA family. Homodimer; the beta-strands of each monomer intercalate to form a hydrophobic core, while the alpha-helices form wings that extend away from the core.

Its subcellular location is the cytoplasm. Its function is as follows. A translational regulator that binds mRNA to regulate translation initiation and/or mRNA stability. Usually binds in the 5'-UTR at or near the Shine-Dalgarno sequence preventing ribosome-binding, thus repressing translation. Its main target seems to be the major flagellin gene, while its function is anatagonized by FliW. In Thermosipho africanus (strain TCF52B), this protein is Translational regulator CsrA.